The sequence spans 380 residues: Glucose-1-phosphate adenylyltransferase (380 aa).

Alpha-D-glucose 1-phosphate is bound by residues Gly164, 179–180 (EK), and Ser190.

Belongs to the bacterial/plant glucose-1-phosphate adenylyltransferase family. Homotetramer.

The enzyme catalyses alpha-D-glucose 1-phosphate + ATP + H(+) = ADP-alpha-D-glucose + diphosphate. Its pathway is glycan biosynthesis; glycogen biosynthesis. Functionally, involved in the biosynthesis of ADP-glucose, a building block required for the elongation reactions to produce glycogen. Catalyzes the reaction between ATP and alpha-D-glucose 1-phosphate (G1P) to produce pyrophosphate and ADP-Glc. This Streptococcus gordonii (strain Challis / ATCC 35105 / BCRC 15272 / CH1 / DL1 / V288) protein is Glucose-1-phosphate adenylyltransferase.